A 207-amino-acid polypeptide reads, in one-letter code: Thiamine-phosphate synthase (207 aa).

Residues 35–39 (QYRDK) and Asn67 each bind 4-amino-2-methyl-5-(diphosphooxymethyl)pyrimidine. 2 residues coordinate Mg(2+): Asp68 and Asp86. Position 105 (Thr105) interacts with 4-amino-2-methyl-5-(diphosphooxymethyl)pyrimidine. 132 to 134 (SVT) lines the 2-[(2R,5Z)-2-carboxy-4-methylthiazol-5(2H)-ylidene]ethyl phosphate pocket. 4-amino-2-methyl-5-(diphosphooxymethyl)pyrimidine is bound at residue Lys135. Gly162 provides a ligand contact to 2-[(2R,5Z)-2-carboxy-4-methylthiazol-5(2H)-ylidene]ethyl phosphate.

It belongs to the thiamine-phosphate synthase family. Mg(2+) serves as cofactor.

The catalysed reaction is 2-[(2R,5Z)-2-carboxy-4-methylthiazol-5(2H)-ylidene]ethyl phosphate + 4-amino-2-methyl-5-(diphosphooxymethyl)pyrimidine + 2 H(+) = thiamine phosphate + CO2 + diphosphate. It carries out the reaction 2-(2-carboxy-4-methylthiazol-5-yl)ethyl phosphate + 4-amino-2-methyl-5-(diphosphooxymethyl)pyrimidine + 2 H(+) = thiamine phosphate + CO2 + diphosphate. It catalyses the reaction 4-methyl-5-(2-phosphooxyethyl)-thiazole + 4-amino-2-methyl-5-(diphosphooxymethyl)pyrimidine + H(+) = thiamine phosphate + diphosphate. Its pathway is cofactor biosynthesis; thiamine diphosphate biosynthesis; thiamine phosphate from 4-amino-2-methyl-5-diphosphomethylpyrimidine and 4-methyl-5-(2-phosphoethyl)-thiazole: step 1/1. In terms of biological role, condenses 4-methyl-5-(beta-hydroxyethyl)thiazole monophosphate (THZ-P) and 2-methyl-4-amino-5-hydroxymethyl pyrimidine pyrophosphate (HMP-PP) to form thiamine monophosphate (TMP). The chain is Thiamine-phosphate synthase from Pseudomonas putida (strain W619).